A 258-amino-acid polypeptide reads, in one-letter code: Regulatory protein RecX (258 aa).

Belongs to the RecX family.

Its subcellular location is the cytoplasm. Functionally, modulates RecA activity. This chain is Regulatory protein RecX, found in Streptococcus thermophilus (strain ATCC BAA-491 / LMD-9).